The sequence spans 117 residues: MTRVKRGNVARKRRKKILKLAKGFRGSHSRLFRTANQQVMKALRNAYRDRRKRKRDFRRLWITRINAAARANGMSYSQLIGHMKKANIEINRKMLAQLAILDPQAFAKVVETASAAK.

The protein belongs to the bacterial ribosomal protein bL20 family.

Its function is as follows. Binds directly to 23S ribosomal RNA and is necessary for the in vitro assembly process of the 50S ribosomal subunit. It is not involved in the protein synthesizing functions of that subunit. This is Large ribosomal subunit protein bL20 from Crocosphaera subtropica (strain ATCC 51142 / BH68) (Cyanothece sp. (strain ATCC 51142)).